Here is a 303-residue protein sequence, read N- to C-terminus: Elongation factor Ts (303 aa).

Positions 79-82 are involved in Mg(2+) ion dislocation from EF-Tu; sequence TDFT.

It belongs to the EF-Ts family.

Its subcellular location is the cytoplasm. In terms of biological role, associates with the EF-Tu.GDP complex and induces the exchange of GDP to GTP. It remains bound to the aminoacyl-tRNA.EF-Tu.GTP complex up to the GTP hydrolysis stage on the ribosome. The sequence is that of Elongation factor Ts from Magnetococcus marinus (strain ATCC BAA-1437 / JCM 17883 / MC-1).